Consider the following 244-residue polypeptide: Capsid protein (244 aa).

A Bipartite nuclear localization signal motif is present at residues 1 to 24 (MSTSKRKRGDDANWNKRTTKKKPS). Positions 1–39 (MSTSKRKRGDDANWNKRTTKKKPSSAGLKKAGSKAERPS) are disordered.

The protein belongs to the geminiviridae capsid protein family. Homomultimer. Interacts with the movement protein. Binds to single-stranded and double-stranded viral DNA.

Its subcellular location is the virion. It localises to the host nucleus. Functionally, encapsidates the viral genome into characteristic twinned ('geminate') particles. Binds the genomic viral ssDNA and shuttles it into and out of the cell nucleus. Plays a role in protection of the genome from degradation, virus acquisition and transmission by insect vectors, infectivity, and systemic movement. The CP of monopartite geminiviruses is absolutely essential for virus movement. This Maize streak virus genotype B (isolate Tas) (MSV) protein is Capsid protein.